A 186-amino-acid polypeptide reads, in one-letter code: A-type ATP synthase subunit E (186 aa).

This sequence belongs to the V-ATPase E subunit family. In terms of assembly, has multiple subunits with at least A(3), B(3), C, D, E, F, H, I and proteolipid K(x).

It is found in the cell membrane. Its function is as follows. Component of the A-type ATP synthase that produces ATP from ADP in the presence of a proton gradient across the membrane. The sequence is that of A-type ATP synthase subunit E from Methanocella arvoryzae (strain DSM 22066 / NBRC 105507 / MRE50).